Consider the following 1886-residue polypeptide: Highly reducing polyketide synthase (1886 aa).

The region spanning 11-434 (TQDVAIVGLS…GANAHAVLDD (424 aa)) is the Ketosynthase family 3 (KS3) domain. Active-site for beta-ketoacyl synthase activity residues include Cys-182, His-317, and His-357. The malonyl-CoA:ACP transacylase (MAT) domain stretch occupies residues 483 to 568 (FLFSGQDQQS…VNNDLANTKK (86 aa)). The interval 616 to 750 (RSLIGAPQPS…GLLSIEYESS (135 aa)) is N-terminal hotdog fold. The 311-residue stretch at 616-926 (RSLIGAPQPS…CTAISEATNP (311 aa)) folds into the PKS/mFAS DH domain. The segment at 618–924 (LIGAPQPSYG…LHCTAISEAT (307 aa)) is dehydratase (DH) domain. The Proton acceptor; for dehydratase activity role is filled by His-648. Positions 778 to 926 (HTTQSPKALY…CTAISEATNP (149 aa)) are C-terminal hotdog fold. Residue Asp-838 is the Proton donor; for dehydratase activity of the active site. Positions 1169–1480 (GMLDEIYFEA…AGKHMGKVAL (312 aa)) are enoylreductase (ER) domain. Residues 1503–1681 (ATYVLVGGFG…VSLDLGLMRD (179 aa)) are catalytic ketoreductase (KRc) domain. In terms of domain architecture, Carrier spans 1802-1879 (DVTDLVLEIL…DLVDKIVAKS (78 aa)). An O-(pantetheine 4'-phosphoryl)serine modification is found at Ser-1839.

Its pathway is mycotoxin biosynthesis. Functionally, highly reducing polyketide synthase; part of the gene cluster that mediates the biosynthesis of the selective antifungal agent ascochitine, an o-quinone methide that plays a possible protective role against other microbial competitors in nature and is considered to be important for pathogenicity of legume-associated Didymella species. The pathway probably begins with the synthesis of a keto-aldehyde intermediate by the ascochitine non-reducing polyketide synthase pksAC from successive condensations of 4 malonyl-CoA units, presumably with a simple acetyl-CoA starter unit. Release of the keto-aldehyde intermediate is consistent with the presence of the C-terminal reductive release domain. The HR-PKS (orf7) probably makes a diketide starter unit which is passed to the non-reducing polyketide synthase pksAC for further extension, producing ascochital and ascochitine. The aldehyde dehydrogenase (orf1), the 2-oxoglutarate-dependent dioxygenase (orf3) and the dehydrogenase (orf9) are probably involved in subsequent oxidations of methyl groups to the carboxylic acid of the heterocyclic ring. The ascochitine gene cluster also includes a gene encoding a short peptide with a cupin domain (orf2) that is often found in secondary metabolite gene clusters and which function has still to be determined. The sequence is that of Highly reducing polyketide synthase from Didymella fabae (Leaf and pod spot disease fungus).